Here is a 318-residue protein sequence, read N- to C-terminus: Porphobilinogen deaminase (318 aa).

Position 241 is an S-(dipyrrolylmethanemethyl)cysteine (Cys241).

Belongs to the HMBS family. As to quaternary structure, monomer. Dipyrromethane is required as a cofactor.

It catalyses the reaction 4 porphobilinogen + H2O = hydroxymethylbilane + 4 NH4(+). It functions in the pathway porphyrin-containing compound metabolism; protoporphyrin-IX biosynthesis; coproporphyrinogen-III from 5-aminolevulinate: step 2/4. Functionally, tetrapolymerization of the monopyrrole PBG into the hydroxymethylbilane pre-uroporphyrinogen in several discrete steps. In Geobacter sulfurreducens (strain ATCC 51573 / DSM 12127 / PCA), this protein is Porphobilinogen deaminase.